Consider the following 73-residue polypeptide: Small, acid-soluble spore protein C2 (73 aa).

Belongs to the alpha/beta-type SASP family.

Functionally, SASP are bound to spore DNA. They are double-stranded DNA-binding proteins that cause DNA to change to an a-like conformation. They protect the DNA backbone from chemical and enzymatic cleavage and are thus involved in dormant spore's high resistance to UV light. This Priestia megaterium (Bacillus megaterium) protein is Small, acid-soluble spore protein C2 (SASP-C2).